The chain runs to 131 residues: Conotoxin Cal8.1 (131 aa).

Positions 1–19 are cleaved as a signal peptide; the sequence is MKLLLTLLLGSALMCITLA. Positions 20–38 are excised as a propeptide; it reads DECGLGTHRPVKEVIDNVR.

Post-translationally, contains 4 disulfide bonds. In terms of tissue distribution, expressed by the venom duct.

It is found in the secreted. Its function is as follows. Probable neurotoxin with unknown target. Possibly targets ion channels. The chain is Conotoxin Cal8.1 from Californiconus californicus (California cone).